We begin with the raw amino-acid sequence, 508 residues long: Photosystem II CP47 reaction center protein (508 aa).

Helical transmembrane passes span 21-36 (AVHI…WAGS), 101-115 (ILFS…IWHW), 140-156 (GIHL…FGAF), 203-218 (IAAG…FHLS), 237-252 (VLSS…AFVV), and 457-472 (SFAL…HGAR).

Belongs to the PsbB/PsbC family. PsbB subfamily. As to quaternary structure, PSII is composed of 1 copy each of membrane proteins PsbA, PsbB, PsbC, PsbD, PsbE, PsbF, PsbH, PsbI, PsbJ, PsbK, PsbL, PsbM, PsbT, PsbX, PsbY, PsbZ, Psb30/Ycf12, at least 3 peripheral proteins of the oxygen-evolving complex and a large number of cofactors. It forms dimeric complexes. Binds multiple chlorophylls. PSII binds additional chlorophylls, carotenoids and specific lipids. serves as cofactor.

The protein localises to the plastid. It localises to the chloroplast thylakoid membrane. Functionally, one of the components of the core complex of photosystem II (PSII). It binds chlorophyll and helps catalyze the primary light-induced photochemical processes of PSII. PSII is a light-driven water:plastoquinone oxidoreductase, using light energy to abstract electrons from H(2)O, generating O(2) and a proton gradient subsequently used for ATP formation. The polypeptide is Photosystem II CP47 reaction center protein (Oenothera biennis (German evening primrose)).